The chain runs to 337 residues: Cytoskeleton protein RodZ (337 aa).

The Cytoplasmic portion of the chain corresponds to 1–111; that stretch reads MNTEATHDQN…LGKRRKKRDG (111 aa). The 53-residue stretch at 19–71 folds into the HTH cro/C1-type domain; the sequence is LRNAREQLGLSQQAVAERLCLKVSTVRDIEEDKAPADLASTFLRGYIRSYARL. The segment at residues 30 to 49 is a DNA-binding region (H-T-H motif); it reads QQAVAERLCLKVSTVRDIEE. Residues 112-132 form a helical; Signal-anchor for type II membrane protein membrane-spanning segment; that stretch reads WLMTFTWLVLFVVIGLSGAWW. Residues 133–337 lie on the Periplasmic side of the membrane; the sequence is WQDHKAQQEE…TLNAEQSPAQ (205 aa). Over residues 145 to 167 the composition is skewed to polar residues; the sequence is TMADQSSAELSSNSEQGQSVPLN. The interval 145–237 is disordered; sequence TMADQSSAEL…ATTTPDGAAP (93 aa). The span at 168–207 shows a compositional bias: low complexity; it reads TSTTTDPATTSTPPASVDTTATNTQTPAVTAPAPAVDPQQ. Residues 208 to 218 show a composition bias toward polar residues; it reads NAVVSPSQANV. Residues 219–237 are compositionally biased toward low complexity; sequence DTAATPAPTATTTPDGAAP.

This sequence belongs to the RodZ family.

It localises to the cell inner membrane. Functionally, cytoskeletal protein that is involved in cell-shape control through regulation of the length of the long axis. The protein is Cytoskeleton protein RodZ of Escherichia coli (strain 55989 / EAEC).